The primary structure comprises 173 residues: VQAIYVPADDLTDPAPATTFAHLDATTVLSRQISELGIYPAVDPLDSTSRMLSPHILGEEHYNTARGVQKVLQNYKNLQDIIAILGMDELSEDDKLTVARARKIQRFLSQPFHVAEVFTGAPGKYVDLKESITSFQGVLDGKFDDLPEQSFYMVGGIEEVIAKAEKISKESAA.

It belongs to the ATPase alpha/beta chains family. As to quaternary structure, F-type ATPases have 2 components, CF(1) - the catalytic core - and CF(0) - the membrane proton channel. CF(1) has five subunits: alpha(3), beta(3), gamma(1), delta(1), epsilon(1). CF(0) has three main subunits: a, b and c.

The protein localises to the mitochondrion. It is found in the mitochondrion inner membrane. The enzyme catalyses ATP + H2O + 4 H(+)(in) = ADP + phosphate + 5 H(+)(out). In terms of biological role, mitochondrial membrane ATP synthase (F(1)F(0) ATP synthase or Complex V) produces ATP from ADP in the presence of a proton gradient across the membrane which is generated by electron transport complexes of the respiratory chain. F-type ATPases consist of two structural domains, F(1) - containing the extramembraneous catalytic core and F(0) - containing the membrane proton channel, linked together by a central stalk and a peripheral stalk. During catalysis, ATP synthesis in the catalytic domain of F(1) is coupled via a rotary mechanism of the central stalk subunits to proton translocation. Subunits alpha and beta form the catalytic core in F(1). Rotation of the central stalk against the surrounding alpha(3)beta(3) subunits leads to hydrolysis of ATP in three separate catalytic sites on the beta subunits. The sequence is that of ATP synthase subunit beta, mitochondrial (ATPB) from Actinidia deliciosa (Kiwi).